Reading from the N-terminus, the 246-residue chain is MTSATKTNNSGSISSPIVVALDYANKDAALAFADRVNPRDCRLKVGKEMFTLYGPQLVRDLHQRGFEVFLDLKFHDIPNTTARAVAAAAELGVWMVNVHATGGMRMMTAAKEALLPFGQQAPLLIAVTVLTSMDGGDLRDIGINITPAEQAERLAKLTWDCGLDGVVCSAHEAVRLKQVCGEDFKLVTPGIRPEGSDAGDQRRIMTPEQAVAAGVDYMVIGRPITQSPDPEKTLKDILASLCKGAK.

Substrate contacts are provided by residues aspartate 22, lysine 44, 71-80 (DLKFHDIPNT), threonine 131, arginine 192, glutamine 201, glycine 221, and arginine 222. The Proton donor role is filled by lysine 73.

It belongs to the OMP decarboxylase family. Type 1 subfamily. In terms of assembly, homodimer.

It catalyses the reaction orotidine 5'-phosphate + H(+) = UMP + CO2. It functions in the pathway pyrimidine metabolism; UMP biosynthesis via de novo pathway; UMP from orotate: step 2/2. Functionally, catalyzes the decarboxylation of orotidine 5'-monophosphate (OMP) to uridine 5'-monophosphate (UMP). The protein is Orotidine 5'-phosphate decarboxylase of Yersinia enterocolitica serotype O:8 / biotype 1B (strain NCTC 13174 / 8081).